The primary structure comprises 587 residues: Tyrosine-protein kinase transforming protein Src (587 aa).

The segment at 1 to 58 is disordered; that stretch reads MGSSKSKPKDPSQRRRSLEPPDSTHHGGFPASQTPNKTAAPDTHRTPSRSFGTVATEP. G2 is lipidated: N-myristoyl glycine; by host. Residues 7-25 are compositionally biased toward basic and acidic residues; it reads KPKDPSQRRRSLEPPDSTH. The region spanning 81 to 142 is the SH3 domain; it reads GGVTTFVALY…PSNYVAPSDS (62 aa). The SH2 domain occupies 148–245; it reads WYFGKITRRE…GLCHRLTNVC (98 aa). The Protein kinase domain occupies 267–520; it reads LRLEVKLGQG…YLQAFLEDYF (254 aa). ATP contacts are provided by residues 273–281 and K295; that span reads LGQGCFGEV. The active-site Proton acceptor is the D386. Y416 is modified (phosphotyrosine; by autocatalysis).

It belongs to the protein kinase superfamily. Tyr protein kinase family. SRC subfamily. Post-translationally, the phosphorylated form is termed pp60v-src.

It catalyses the reaction L-tyrosyl-[protein] + ATP = O-phospho-L-tyrosyl-[protein] + ADP + H(+). This phosphoprotein, required for both the initiation and the maintenance of neoplastic transformation, is a protein kinase that catalyzes the phosphorylation of tyrosine residues in vitro. This chain is Tyrosine-protein kinase transforming protein Src (V-SRC), found in Galliformes.